Consider the following 435-residue polypeptide: UDP-N-acetylmuramate--L-alanine ligase (435 aa).

An ATP-binding site is contributed by 108–114; sequence GSHGKTS.

Belongs to the MurCDEF family.

It localises to the cytoplasm. The enzyme catalyses UDP-N-acetyl-alpha-D-muramate + L-alanine + ATP = UDP-N-acetyl-alpha-D-muramoyl-L-alanine + ADP + phosphate + H(+). Its pathway is cell wall biogenesis; peptidoglycan biosynthesis. Its function is as follows. Cell wall formation. The sequence is that of UDP-N-acetylmuramate--L-alanine ligase from Shouchella clausii (strain KSM-K16) (Alkalihalobacillus clausii).